We begin with the raw amino-acid sequence, 286 residues long: Bifunctional protein FolD (286 aa).

Residues 164–166 (GRS), Ser193, and Ile234 each bind NADP(+).

This sequence belongs to the tetrahydrofolate dehydrogenase/cyclohydrolase family. Homodimer.

It catalyses the reaction (6R)-5,10-methylene-5,6,7,8-tetrahydrofolate + NADP(+) = (6R)-5,10-methenyltetrahydrofolate + NADPH. It carries out the reaction (6R)-5,10-methenyltetrahydrofolate + H2O = (6R)-10-formyltetrahydrofolate + H(+). It participates in one-carbon metabolism; tetrahydrofolate interconversion. Its function is as follows. Catalyzes the oxidation of 5,10-methylenetetrahydrofolate to 5,10-methenyltetrahydrofolate and then the hydrolysis of 5,10-methenyltetrahydrofolate to 10-formyltetrahydrofolate. The polypeptide is Bifunctional protein FolD (Oleidesulfovibrio alaskensis (strain ATCC BAA-1058 / DSM 17464 / G20) (Desulfovibrio alaskensis)).